Consider the following 778-residue polypeptide: Lon protease (778 aa).

The region spanning 6 to 207 (LPLMALRDMV…TVISMLNSNI (202 aa)) is the Lon N-terminal domain. 356–363 (GPPGVGKT) is a binding site for ATP. The Lon proteolytic domain occupies 592–773 (EDQIGSTTGL…DQVLKHALVG (182 aa)). Catalysis depends on residues Ser679 and Lys722.

Belongs to the peptidase S16 family. In terms of assembly, homohexamer. Organized in a ring with a central cavity.

It is found in the cytoplasm. It carries out the reaction Hydrolysis of proteins in presence of ATP.. In terms of biological role, ATP-dependent serine protease that mediates the selective degradation of mutant and abnormal proteins as well as certain short-lived regulatory proteins. Required for cellular homeostasis and for survival from DNA damage and developmental changes induced by stress. Degrades polypeptides processively to yield small peptide fragments that are 5 to 10 amino acids long. Binds to DNA in a double-stranded, site-specific manner. The chain is Lon protease from Rickettsia conorii (strain ATCC VR-613 / Malish 7).